The sequence spans 580 residues: CRISPR-associated exonuclease Cas4/endonuclease Cas1 fusion (580 aa).

The tract at residues 1 to 223 is CRISPR-associated exonuclease Cas4; that stretch reads MAPSDTPPSA…RCSLLPICLP (223 aa). Residue Cys44 coordinates [4Fe-4S] cluster. Residues Asp112 and Glu125 each contribute to the Mn(2+) site. 3 residues coordinate [4Fe-4S] cluster: Cys212, Cys215, and Cys221. Residues 248-580 are CRISPR-associated endonuclease Cas1; that stretch reads LYGQTPGARI…IPRYPHYCPR (333 aa). Positions 401, 472, and 487 each coordinate Mn(2+).

It in the N-terminal section; belongs to the CRISPR-associated exonuclease Cas4 family. This sequence in the C-terminal section; belongs to the CRISPR-associated endonuclease Cas1 family. As to quaternary structure, homodimer, forms a heterotetramer with a Cas2 homodimer. [4Fe-4S] cluster is required as a cofactor. Mg(2+) serves as cofactor. The cofactor is Mn(2+).

It carries out the reaction exonucleolytic cleavage in the 5'- to 3'-direction to yield nucleoside 3'-phosphates.. Functionally, CRISPR (clustered regularly interspaced short palindromic repeat), is an adaptive immune system that provides protection against mobile genetic elements (viruses, transposable elements and conjugative plasmids). CRISPR clusters contain spacers, sequences complementary to antecedent mobile elements, and target invading nucleic acids. CRISPR clusters are transcribed and processed into CRISPR RNA (crRNA). The Cas4 region acts as a ssDNA exonuclease, while the Cas1 region acts as a dsDNA endonuclease. Involved in the integration of spacer DNA into the CRISPR cassette. This Rhodospirillum rubrum (strain ATCC 11170 / ATH 1.1.1 / DSM 467 / LMG 4362 / NCIMB 8255 / S1) protein is CRISPR-associated exonuclease Cas4/endonuclease Cas1 fusion (cas4-cas1).